The sequence spans 505 residues: Deoxyguanosinetriphosphate triphosphohydrolase (505 aa).

In terms of domain architecture, HD spans 66–273 (RLTHSMEVQQ…MEAADDISYC (208 aa)).

Belongs to the dGTPase family. Type 1 subfamily. As to quaternary structure, homotetramer. Requires Mg(2+) as cofactor.

It carries out the reaction dGTP + H2O = 2'-deoxyguanosine + triphosphate + H(+). Its function is as follows. dGTPase preferentially hydrolyzes dGTP over the other canonical NTPs. The sequence is that of Deoxyguanosinetriphosphate triphosphohydrolase from Salmonella arizonae (strain ATCC BAA-731 / CDC346-86 / RSK2980).